Consider the following 351-residue polypeptide: Heat-inducible transcription repressor HrcA (351 aa).

Belongs to the HrcA family.

In terms of biological role, negative regulator of class I heat shock genes (grpE-dnaK-dnaJ and groELS operons). Prevents heat-shock induction of these operons. In Acetivibrio thermocellus (strain ATCC 27405 / DSM 1237 / JCM 9322 / NBRC 103400 / NCIMB 10682 / NRRL B-4536 / VPI 7372) (Clostridium thermocellum), this protein is Heat-inducible transcription repressor HrcA.